Consider the following 184-residue polypeptide: dITP/XTP pyrophosphatase (184 aa).

Substrate is bound at residue 8–13 (TGNKGK). Residues glutamate 37 and aspartate 66 each coordinate Mg(2+). Catalysis depends on aspartate 66, which acts as the Proton acceptor. Substrate contacts are provided by residues serine 67, 142–145 (FGYD), lysine 163, and 168–169 (HR).

It belongs to the HAM1 NTPase family. Homodimer. The cofactor is Mg(2+).

The enzyme catalyses XTP + H2O = XMP + diphosphate + H(+). The catalysed reaction is dITP + H2O = dIMP + diphosphate + H(+). It carries out the reaction ITP + H2O = IMP + diphosphate + H(+). Its function is as follows. Pyrophosphatase that catalyzes the hydrolysis of nucleoside triphosphates to their monophosphate derivatives, with a high preference for the non-canonical purine nucleotides XTP (xanthosine triphosphate), dITP (deoxyinosine triphosphate) and ITP. Seems to function as a house-cleaning enzyme that removes non-canonical purine nucleotides from the nucleotide pool, thus preventing their incorporation into DNA/RNA and avoiding chromosomal lesions. The chain is dITP/XTP pyrophosphatase from Methanosarcina acetivorans (strain ATCC 35395 / DSM 2834 / JCM 12185 / C2A).